The chain runs to 217 residues: Thiamine-phosphate synthase (217 aa).

4-amino-2-methyl-5-(diphosphooxymethyl)pyrimidine contacts are provided by residues 39 to 43 and N71; that span reads QYRDK. Residues D72 and D91 each coordinate Mg(2+). T110 contacts 4-amino-2-methyl-5-(diphosphooxymethyl)pyrimidine. 137 to 139 is a binding site for 2-[(2R,5Z)-2-carboxy-4-methylthiazol-5(2H)-ylidene]ethyl phosphate; the sequence is SNT. K140 lines the 4-amino-2-methyl-5-(diphosphooxymethyl)pyrimidine pocket. Residue G167 participates in 2-[(2R,5Z)-2-carboxy-4-methylthiazol-5(2H)-ylidene]ethyl phosphate binding.

It belongs to the thiamine-phosphate synthase family. Mg(2+) is required as a cofactor.

The enzyme catalyses 2-[(2R,5Z)-2-carboxy-4-methylthiazol-5(2H)-ylidene]ethyl phosphate + 4-amino-2-methyl-5-(diphosphooxymethyl)pyrimidine + 2 H(+) = thiamine phosphate + CO2 + diphosphate. It carries out the reaction 2-(2-carboxy-4-methylthiazol-5-yl)ethyl phosphate + 4-amino-2-methyl-5-(diphosphooxymethyl)pyrimidine + 2 H(+) = thiamine phosphate + CO2 + diphosphate. The catalysed reaction is 4-methyl-5-(2-phosphooxyethyl)-thiazole + 4-amino-2-methyl-5-(diphosphooxymethyl)pyrimidine + H(+) = thiamine phosphate + diphosphate. It participates in cofactor biosynthesis; thiamine diphosphate biosynthesis; thiamine phosphate from 4-amino-2-methyl-5-diphosphomethylpyrimidine and 4-methyl-5-(2-phosphoethyl)-thiazole: step 1/1. Functionally, condenses 4-methyl-5-(beta-hydroxyethyl)thiazole monophosphate (THZ-P) and 2-methyl-4-amino-5-hydroxymethyl pyrimidine pyrophosphate (HMP-PP) to form thiamine monophosphate (TMP). In Saccharophagus degradans (strain 2-40 / ATCC 43961 / DSM 17024), this protein is Thiamine-phosphate synthase.